The following is a 1157-amino-acid chain: ATP-dependent helicase/deoxyribonuclease subunit B (1157 aa).

The region spanning 1–277 (MTLQIIAGKA…KILLENKRAN (277 aa)) is the UvrD-like helicase ATP-binding domain. 8 to 15 (GKAGTGKT) is a binding site for ATP. In terms of domain architecture, UvrD-like helicase C-terminal spans 271–590 (LENKRANSDS…VLADMENAKL (320 aa)). The [4Fe-4S] cluster site is built by Cys794, Cys1115, Cys1118, and Cys1124.

The protein belongs to the helicase family. AddB/RexB type 1 subfamily. Heterodimer of AddA and AddB. It depends on Mg(2+) as a cofactor. Requires [4Fe-4S] cluster as cofactor.

The heterodimer acts as both an ATP-dependent DNA helicase and an ATP-dependent, dual-direction single-stranded exonuclease. Recognizes the chi site generating a DNA molecule suitable for the initiation of homologous recombination. The AddB subunit has 5' -&gt; 3' nuclease activity but not helicase activity. This Listeria innocua serovar 6a (strain ATCC BAA-680 / CLIP 11262) protein is ATP-dependent helicase/deoxyribonuclease subunit B.